The chain runs to 130 residues: Protein ApaG (130 aa).

The 125-residue stretch at 3 to 127 (RAITRNIQVT…FSLDVPDVRR (125 aa)) folds into the ApaG domain.

The sequence is that of Protein ApaG from Xanthobacter autotrophicus (strain ATCC BAA-1158 / Py2).